Consider the following 436-residue polypeptide: Protein 60A (436 aa).

An N-terminal signal peptide occupies residues 1-27 (MTASLVVLPSLWLILIIFTAPYTHCTQ). The propeptide occupies 28–317 (SGIYIDNGKD…STLHQRKKSK (290 aa)). N-linked (GlcNAc...) asparagine glycosylation is found at N102, N114, N217, and N229. The segment at 293-322 (IKSTSGHSTQKRTKRSTLHQRKKSKSEPVN) is disordered. A compositionally biased stretch (basic residues) spans 301–316 (TQKRTKRSTLHQRKKS). 3 disulfides stabilise this stretch: C335-C401, C364-C433, and C368-C435. The N-linked (GlcNAc...) asparagine glycan is linked to N377.

Belongs to the TGF-beta family. As to quaternary structure, homodimer; disulfide-linked.

It localises to the secreted. The protein is Protein 60A (gbb) of Drosophila virilis (Fruit fly).